The chain runs to 691 residues: Threonine--tRNA ligase (691 aa).

Positions 1–22 (MSVPAQPAPGADGGDPRQPIRV) are disordered. The region spanning 1-73 (MSVPAQPAPG…DADAEVTPIA (73 aa)) is the TGS domain. The interval 268–574 (DHRKLGVELD…LTEHYAGAFP (307 aa)) is catalytic. Residues cysteine 373, histidine 424, and histidine 551 each coordinate Zn(2+).

The protein belongs to the class-II aminoacyl-tRNA synthetase family. In terms of assembly, homodimer. Zn(2+) serves as cofactor.

It is found in the cytoplasm. It catalyses the reaction tRNA(Thr) + L-threonine + ATP = L-threonyl-tRNA(Thr) + AMP + diphosphate + H(+). Functionally, catalyzes the attachment of threonine to tRNA(Thr) in a two-step reaction: L-threonine is first activated by ATP to form Thr-AMP and then transferred to the acceptor end of tRNA(Thr). Also edits incorrectly charged L-seryl-tRNA(Thr). In Mycobacterium marinum (strain ATCC BAA-535 / M), this protein is Threonine--tRNA ligase.